A 323-amino-acid polypeptide reads, in one-letter code: Voltage-dependent calcium channel gamma-2 subunit (323 aa).

Residues 10-30 form a helical membrane-spanning segment; it reads MLLTTVGAFAAFSLMTIAVGT. A glycan (N-linked (GlcNAc...) asparagine) is linked at N48. The next 3 helical transmembrane spans lie at 104 to 124, 134 to 154, and 182 to 202; these read SSIFPILSVILLFMGGLCIAA, IILSAGIFFVSAGLSNIIGII, and FGALSFIIAEMVGVLAVHMFI. The segment at 233 to 261 is disordered; that stretch reads YQRRSRSSSRSTEPSHSRDASPVGVKGFN. S253 bears the Phosphoserine mark. Y271 carries the phosphotyrosine modification. T321 carries the phosphothreonine; by PKA modification.

This sequence belongs to the PMP-22/EMP/MP20 family. CACNG subfamily. As to quaternary structure, the L-type calcium channel is composed of five subunits: alpha-1, alpha-2/delta, beta and gamma. Interacts with the PDZ domains of DLG4/PSD-95 and DLG1/SAP97. May interact with GOPC. Acts as an auxiliary subunit for AMPA-selective glutamate receptors (AMPARs). Found in a complex with GRIA1, GRIA2, GRIA3, GRIA4, CNIH2, CNIH3, CACNG3, CACNG4, CACNG5, CACNG7 and CACNG8. Interacts with GRIA1 and GRIA2. Interacts with MPP2. Phosphorylation of Thr-321 by PKA impairs interaction with DLG1 and DLG4. In terms of tissue distribution, brain.

Its subcellular location is the membrane. It localises to the synapse. The protein resides in the synaptosome. In terms of biological role, regulates the trafficking and gating properties of AMPA-selective glutamate receptors (AMPARs). Promotes their targeting to the cell membrane and synapses and modulates their gating properties by slowing their rates of activation, deactivation and desensitization. Does not show subunit-specific AMPA receptor regulation and regulates all AMPAR subunits. Thought to stabilize the calcium channel in an inactivated (closed) state. The protein is Voltage-dependent calcium channel gamma-2 subunit (Cacng2) of Mus musculus (Mouse).